A 297-amino-acid chain; its full sequence is Probable endonuclease 4 (297 aa).

The Zn(2+) site is built by histidine 69, histidine 110, glutamate 145, aspartate 179, histidine 182, histidine 214, aspartate 227, histidine 229, and glutamate 259.

It belongs to the AP endonuclease 2 family. Zn(2+) is required as a cofactor.

It catalyses the reaction Endonucleolytic cleavage to 5'-phosphooligonucleotide end-products.. In terms of biological role, endonuclease IV plays a role in DNA repair. It cleaves phosphodiester bonds at apurinic or apyrimidinic (AP) sites, generating a 3'-hydroxyl group and a 5'-terminal sugar phosphate. The protein is Probable endonuclease 4 of Listeria innocua serovar 6a (strain ATCC BAA-680 / CLIP 11262).